A 132-amino-acid polypeptide reads, in one-letter code: Pro-MCH 1 (132 aa).

The N-terminal stretch at 1–24 (MRDSVLSVIFALALFLECYTPSMA) is a signal peptide. Cys120 and Cys129 are oxidised to a cystine.

Belongs to the MCH family. In terms of tissue distribution, pituitary gland. Produced in neurons of lateral basal hypothalamus which project both to the brain and to the neural lobe of the pituitary gland from where MCH is released.

Functionally, plays a role in skin pigmentation by antagonizing the action of melanotropin alpha. Induces melanin concentration within the melanophores. May participate in the control of the hypothalamo-pituitary adrenal gland axis by inhibiting the release of ACTH. This chain is Pro-MCH 1 (mch1), found in Oncorhynchus kisutch (Coho salmon).